Consider the following 421-residue polypeptide: MFDTLTHGELLKKTAMEVEADIAGIHKQIEEISERNEWRVLQSYRKHKVSDTHFTPSTGYGYDDIGRDTLESIYADVFGGEAGLVRPQIISGTHAISIALFGVLRPGDELLYITGKPYDTLEEIVGVRGGENAGSLKDFQIGYNAVDLTKDGKIDYDAVAAAINPKTKVIGIQRSKGYANRPSFLISEIKEMIRFVKEINENLIVFVDNCYGEFVEELEPCHVGADLMAGSLIKNPGGGLAKTGGYLVGKAKWIEACSYRMTSPGIGREAGASLYSLQEMYQGFFLAPHVVSQSLKGAVFTARFLEKLGFTSNPKWDAKRTDLIQSVEFSDREKMIAFCQAIQFASPINAHVTPYPAYMPGYEDDVIMAAGTFIQGASIELSADGPIRPPYVAYVQGGLTYSHVKNAICSAVDSLMQKQLI.

This is an uncharacterized protein from Bacillus subtilis (strain 168).